A 444-amino-acid chain; its full sequence is Type VII secretion system protein EssB (444 aa).

Residues 1-229 (MVKNHDPKNE…RKVGHTVFKW (229 aa)) lie on the Cytoplasmic side of the membrane. The helical transmembrane segment at 230–250 (VAIGMTTLSVLLIAFLAFLYF) threads the bilayer. The Extracellular segment spans residues 251-444 (SVMKHNERIE…EKRQEAERKK (194 aa)). The interval 366-444 (KNNGDLSNDK…EKRQEAERKK (79 aa)) is disordered. Over residues 372–444 (SNDKRSEETK…EKRQEAERKK (73 aa)) the composition is skewed to basic and acidic residues. Residues 387–443 (LQDILDKEKQVKDEKAKSEEEKAKAKDEKLKQQEENEKKQKEQAQKDKEKRQEAERK) are a coiled coil.

It belongs to the EssB family.

Its subcellular location is the cell membrane. Component of the type VII secretion system (Ess). Required for the secretion of EsxA. This Staphylococcus aureus (strain MRSA252) protein is Type VII secretion system protein EssB.